Here is a 210-residue protein sequence, read N- to C-terminus: Large ribosomal subunit protein bL25 (210 aa).

The tract at residues 191–210 (KPAPKAAETDEDGEEAASEE) is disordered. The span at 199–210 (TDEDGEEAASEE) shows a compositional bias: acidic residues.

It belongs to the bacterial ribosomal protein bL25 family. CTC subfamily. Part of the 50S ribosomal subunit; part of the 5S rRNA/L5/L18/L25 subcomplex. Contacts the 5S rRNA. Binds to the 5S rRNA independently of L5 and L18.

This is one of the proteins that binds to the 5S RNA in the ribosome where it forms part of the central protuberance. The chain is Large ribosomal subunit protein bL25 from Alteromonas mediterranea (strain DSM 17117 / CIP 110805 / LMG 28347 / Deep ecotype).